An 89-amino-acid polypeptide reads, in one-letter code: Large ribosomal subunit protein bL27 (89 aa).

A disordered region spans residues 1–24; that stretch reads MAHKKGTGSTRNGRDSNSKRLGVK.

The protein belongs to the bacterial ribosomal protein bL27 family.

The polypeptide is Large ribosomal subunit protein bL27 (Synechococcus sp. (strain WH7803)).